The following is a 914-amino-acid chain: DNA mismatch repair protein MutS (914 aa).

Positions 1 to 24 are disordered; the sequence is MDNKTDNKNNLTPQSAPSSAPHKE. Polar residues predominate over residues 8-18; the sequence is KNNLTPQSAPS. 662–669 is a binding site for ATP; that stretch reads GPNMGGKS.

Belongs to the DNA mismatch repair MutS family.

Functionally, this protein is involved in the repair of mismatches in DNA. It is possible that it carries out the mismatch recognition step. This protein has a weak ATPase activity. This is DNA mismatch repair protein MutS from Bartonella henselae (strain ATCC 49882 / DSM 28221 / CCUG 30454 / Houston 1) (Rochalimaea henselae).